A 503-amino-acid chain; its full sequence is Protein-cysteine N-palmitoyltransferase HHAT-like protein (503 aa).

The next 8 helical transmembrane spans lie at 12 to 31, 65 to 87, 100 to 122, 127 to 149, 250 to 272, 287 to 309, 426 to 445, and 460 to 482; these read LGLY…RGLL, WVMW…VLFA, WMYA…LLLL, MVLY…LASL, AGLS…ILTI, LAGL…FGVV, VRAL…NLVS, and ILTG…VQLV.

Belongs to the membrane-bound acyltransferase family. HHAT subfamily. As to quaternary structure, interacts with SHH.

It is found in the endoplasmic reticulum membrane. In terms of biological role, negatively regulates N-terminal palmitoylation of SHH by HHAT/SKN. In Mus musculus (Mouse), this protein is Protein-cysteine N-palmitoyltransferase HHAT-like protein (Hhatl).